A 51-amino-acid chain; its full sequence is Gene 62 protein (51 aa).

In Mycobacterium (Mycobacteriophage L5), this protein is Gene 62 protein (62).